The primary structure comprises 224 residues: Ribose-5-phosphate isomerase A (224 aa).

Residues 33 to 36 (TGST), 86 to 89 (DGAD), and 99 to 102 (KGGG) contribute to the substrate site. The Proton acceptor role is filled by E108. K126 serves as a coordination point for substrate.

The protein belongs to the ribose 5-phosphate isomerase family. Homodimer.

It carries out the reaction aldehydo-D-ribose 5-phosphate = D-ribulose 5-phosphate. It participates in carbohydrate degradation; pentose phosphate pathway; D-ribose 5-phosphate from D-ribulose 5-phosphate (non-oxidative stage): step 1/1. In terms of biological role, catalyzes the reversible conversion of ribose-5-phosphate to ribulose 5-phosphate. The protein is Ribose-5-phosphate isomerase A of Bordetella avium (strain 197N).